The following is a 95-amino-acid chain: MNLKPLNDRVLVKRLESEEKTAGGLYIPDTAKEKPSRGEVVAAGPGKTADDGKLVAMTVKAGDMVLFNKYAGTEIKIDGVEHLVMREDDILAIIE.

Belongs to the GroES chaperonin family. As to quaternary structure, heptamer of 7 subunits arranged in a ring. Interacts with the chaperonin GroEL.

It is found in the cytoplasm. Together with the chaperonin GroEL, plays an essential role in assisting protein folding. The GroEL-GroES system forms a nano-cage that allows encapsulation of the non-native substrate proteins and provides a physical environment optimized to promote and accelerate protein folding. GroES binds to the apical surface of the GroEL ring, thereby capping the opening of the GroEL channel. The polypeptide is Co-chaperonin GroES (Nitratidesulfovibrio vulgaris (strain ATCC 29579 / DSM 644 / CCUG 34227 / NCIMB 8303 / VKM B-1760 / Hildenborough) (Desulfovibrio vulgaris)).